The following is a 282-amino-acid chain: Ribosomal RNA small subunit methyltransferase A (282 aa).

Asn-28, Leu-30, Gly-55, Glu-77, Asp-103, and Asn-122 together coordinate S-adenosyl-L-methionine.

It belongs to the class I-like SAM-binding methyltransferase superfamily. rRNA adenine N(6)-methyltransferase family. RsmA subfamily.

The protein resides in the cytoplasm. It carries out the reaction adenosine(1518)/adenosine(1519) in 16S rRNA + 4 S-adenosyl-L-methionine = N(6)-dimethyladenosine(1518)/N(6)-dimethyladenosine(1519) in 16S rRNA + 4 S-adenosyl-L-homocysteine + 4 H(+). Specifically dimethylates two adjacent adenosines (A1518 and A1519) in the loop of a conserved hairpin near the 3'-end of 16S rRNA in the 30S particle. May play a critical role in biogenesis of 30S subunits. The protein is Ribosomal RNA small subunit methyltransferase A of Paracoccus denitrificans (strain Pd 1222).